Consider the following 570-residue polypeptide: MSTRISRSVYADMFGPTTGDRVRLADTDLIIEVEKDYTTYGEEVKFGGGKVIRDGMGQSQVTNKDGAADTVITNAVVVDHWGIVKADVAIKAGMIHAIGKAGNPDIQPNVDIIIGPGTDIIAGEGKILTAGGFDSHIHFICPQQIEHALMSGVTTMLGGGTGPSHGTFATTCTPGPWHIGRMIQSFDAFPVNLGISGKGNAALPGALIEMVEGGACALKLHEDWGTTPAAIDNCLTVADDHDVQVMIHSDTLNESGFVEDTIKAFKGRTIHAFHTEGAGGGHAPDIIKVAGLANVLPSSTNPTRPFTRNTIDEHLDMLMVCHHLDPSIAEDLAFAESRIRKETIAAEDILHDLGALSMMSSDSQAMGRLGEVIIRTWQTADKMKKQRGSLPQDSSRNDNFRVKRYIAKYTINPSIAHGVSKLIGSVETGKMADLVLWSPAFFGVKPDCIIKAGMIVAAPMGDPNASIPTPQPVHYQPMFGAYGRALTASSVVFTSQAAAAGPLARDLGIAKALYPVSNVRGGISKKSMIHNDATPTIEVDPETYEVRADGELLTCAPAEVLPMAQRYFMY.

In terms of domain architecture, Urease spans 131–570 (GGFDSHIHFI…LPMAQRYFMY (440 aa)). Ni(2+)-binding residues include histidine 136, histidine 138, and lysine 219. The residue at position 219 (lysine 219) is an N6-carboxylysine. Histidine 221 is a binding site for substrate. Ni(2+)-binding residues include histidine 248 and histidine 274. Histidine 322 acts as the Proton donor in catalysis. Aspartate 362 lines the Ni(2+) pocket.

This sequence belongs to the metallo-dependent hydrolases superfamily. Urease alpha subunit family. Heterotrimer of UreA (gamma), UreB (beta) and UreC (alpha) subunits. Three heterotrimers associate to form the active enzyme. It depends on Ni cation as a cofactor. Carboxylation allows a single lysine to coordinate two nickel ions.

Its subcellular location is the cytoplasm. The catalysed reaction is urea + 2 H2O + H(+) = hydrogencarbonate + 2 NH4(+). Its pathway is nitrogen metabolism; urea degradation; CO(2) and NH(3) from urea (urease route): step 1/1. The polypeptide is Urease subunit alpha (Rhodopseudomonas palustris (strain HaA2)).